The chain runs to 810 residues: Probable dehydratase YbiW (810 aa).

Positions 11–682 (DRIKAHKNAL…QTMATPDGRK (672 aa)) constitute a PFL domain. The disordered stretch occupies residues 677 to 699 (TPDGRKAHTPLAEGASPASGTDH). One can recognise a Glycine radical domain in the interval 689–810 (EGASPASGTD…DIIARTEHML (122 aa)). Gly-786 is subject to Glycine radical.

It belongs to the glycyl radical enzyme (GRE) family.

Probably shows dehydratase activity. This Escherichia coli (strain K12) protein is Probable dehydratase YbiW (ybiW).